The sequence spans 237 residues: Phosphoglycolate phosphatase (237 aa).

Asp-15 functions as the Nucleophile in the catalytic mechanism. Positions 15, 17, and 177 each coordinate Mg(2+).

It belongs to the HAD-like hydrolase superfamily. CbbY/CbbZ/Gph/YieH family. Requires Mg(2+) as cofactor.

The enzyme catalyses 2-phosphoglycolate + H2O = glycolate + phosphate. Its pathway is organic acid metabolism; glycolate biosynthesis; glycolate from 2-phosphoglycolate: step 1/1. Functionally, specifically catalyzes the dephosphorylation of 2-phosphoglycolate. Is involved in the dissimilation of the intracellular 2-phosphoglycolate formed during the DNA repair of 3'-phosphoglycolate ends, a major class of DNA lesions induced by oxidative stress. The chain is Phosphoglycolate phosphatase from Caulobacter vibrioides (strain ATCC 19089 / CIP 103742 / CB 15) (Caulobacter crescentus).